The primary structure comprises 78 residues: uncharacterized protein (78 aa).

The disordered stretch occupies residues 1–78; sequence MSSNSNTDHS…VDLEGPKDEQ (78 aa). Composition is skewed to basic and acidic residues over residues 10–33 and 63–78; these read STGDNRSKSEKQTDLRNALRETES and LNLKEPVDLEGPKDEQ.

This is an uncharacterized protein from Schizosaccharomyces pombe (strain 972 / ATCC 24843) (Fission yeast).